We begin with the raw amino-acid sequence, 184 residues long: RNA 2',3'-cyclic phosphodiesterase (184 aa).

Catalysis depends on His42, which acts as the Proton donor. 2 short sequence motifs (HXTX) span residues 42-45 (HFTL) and 127-130 (HLTV). Residue His127 is the Proton acceptor of the active site.

This sequence belongs to the 2H phosphoesterase superfamily. ThpR family.

The enzyme catalyses a 3'-end 2',3'-cyclophospho-ribonucleotide-RNA + H2O = a 3'-end 2'-phospho-ribonucleotide-RNA + H(+). Hydrolyzes RNA 2',3'-cyclic phosphodiester to an RNA 2'-phosphomonoester. This chain is RNA 2',3'-cyclic phosphodiesterase, found in Methanothermobacter thermautotrophicus (strain ATCC 29096 / DSM 1053 / JCM 10044 / NBRC 100330 / Delta H) (Methanobacterium thermoautotrophicum).